The chain runs to 146 residues: Large ribosomal subunit protein uL15 (146 aa).

The span at M1–R13 shows a compositional bias: basic and acidic residues. The segment at M1–G52 is disordered. 2 stretches are compositionally biased toward gly residues: residues R21–A31 and S42–G52.

It belongs to the universal ribosomal protein uL15 family. Part of the 50S ribosomal subunit.

In terms of biological role, binds to the 23S rRNA. The sequence is that of Large ribosomal subunit protein uL15 from Bacillus anthracis (strain A0248).